The following is a 107-amino-acid chain: C-X-C motif chemokine 2 (107 aa).

An N-terminal signal peptide occupies residues 1–34 (MARATLSAAPSNPRLLRVALLLLLLVAASRRAAG). 2 cysteine pairs are disulfide-bonded: C43–C69 and C45–C85.

The protein belongs to the intercrine alpha (chemokine CxC) family. Post-translationally, the N-terminal processed form GRO-beta(5-73) is produced by proteolytic cleavage after secretion from bone marrow stromal cells.

It localises to the secreted. Functionally, produced by activated monocytes and neutrophils and expressed at sites of inflammation. Hematoregulatory chemokine, which, in vitro, suppresses hematopoietic progenitor cell proliferation. GRO-beta(5-73) shows a highly enhanced hematopoietic activity. This chain is C-X-C motif chemokine 2 (CXCL2), found in Homo sapiens (Human).